A 310-amino-acid polypeptide reads, in one-letter code: Carbamate kinase (310 aa).

It belongs to the carbamate kinase family.

It is found in the cytoplasm. It catalyses the reaction hydrogencarbonate + NH4(+) + ATP = carbamoyl phosphate + ADP + H2O + H(+). The protein operates within metabolic intermediate metabolism; carbamoyl phosphate degradation; CO(2) and NH(3) from carbamoyl phosphate: step 1/1. This Staphylococcus epidermidis (strain ATCC 35984 / DSM 28319 / BCRC 17069 / CCUG 31568 / BM 3577 / RP62A) protein is Carbamate kinase (arcC).